Reading from the N-terminus, the 447-residue chain is C4-dicarboxylate transport protein (447 aa).

The next 10 helical transmembrane spans lie at 21 to 41, 57 to 77, 92 to 112, 141 to 161, 163 to 183, 201 to 221, 232 to 252, 320 to 340, 345 to 365, and 368 to 388; these read HLYV…YFAP, LVKM…IAGM, IYFL…VNIV, SLIG…LASG, ILQV…VGEA, LVAI…AYTV, LAML…IVLG, IYMT…LSWG, LLAV…AGFV, and AATL…IFGV.

It belongs to the dicarboxylate/amino acid:cation symporter (DAACS) (TC 2.A.23) family.

It localises to the cell inner membrane. Functionally, responsible for the transport of dicarboxylates such as succinate, fumarate, and malate from the periplasm across the membrane. This is C4-dicarboxylate transport protein from Granulibacter bethesdensis (strain ATCC BAA-1260 / CGDNIH1).